The following is a 319-amino-acid chain: L-lactate dehydrogenase 2 (319 aa).

NAD(+) is bound by residues Val-17, Asp-38, Lys-43, Tyr-69, and 83–84 (GA). The substrate site is built by Gln-86 and Arg-92. NAD(+)-binding positions include Ser-105, 122-124 (ATN), and Ser-147. 124 to 127 (NPVD) lines the substrate pocket. 152–155 (DSGR) is a binding site for substrate. 2 residues coordinate beta-D-fructose 1,6-bisphosphate: Arg-157 and His-172. The active-site Proton acceptor is His-179. Tyr-224 bears the Phosphotyrosine mark. Thr-233 contacts substrate.

This sequence belongs to the LDH/MDH superfamily. LDH family. In terms of assembly, homotetramer.

It localises to the cytoplasm. It carries out the reaction (S)-lactate + NAD(+) = pyruvate + NADH + H(+). Its pathway is fermentation; pyruvate fermentation to lactate; (S)-lactate from pyruvate: step 1/1. With respect to regulation, allosterically activated by fructose 1,6-bisphosphate (FBP). Catalyzes the conversion of lactate to pyruvate. This chain is L-lactate dehydrogenase 2, found in Peribacillus psychrosaccharolyticus (Bacillus psychrosaccharolyticus).